Here is a 431-residue protein sequence, read N- to C-terminus: Adenylosuccinate lyase (431 aa).

N(6)-(1,2-dicarboxyethyl)-AMP-binding positions include 4–5 (RY), 67–69 (NHD), and 93–94 (TS). The active-site Proton donor/acceptor is the histidine 141. A N(6)-(1,2-dicarboxyethyl)-AMP-binding site is contributed by glutamine 212. Residue serine 262 is the Proton donor/acceptor of the active site. N(6)-(1,2-dicarboxyethyl)-AMP-binding positions include serine 263, 268–270 (KKN), and 307–311 (SVERY).

The protein belongs to the lyase 1 family. Adenylosuccinate lyase subfamily. In terms of assembly, homotetramer. Residues from neighboring subunits contribute catalytic and substrate-binding residues to each active site.

The catalysed reaction is N(6)-(1,2-dicarboxyethyl)-AMP = fumarate + AMP. It catalyses the reaction (2S)-2-[5-amino-1-(5-phospho-beta-D-ribosyl)imidazole-4-carboxamido]succinate = 5-amino-1-(5-phospho-beta-D-ribosyl)imidazole-4-carboxamide + fumarate. It participates in purine metabolism; AMP biosynthesis via de novo pathway; AMP from IMP: step 2/2. It functions in the pathway purine metabolism; IMP biosynthesis via de novo pathway; 5-amino-1-(5-phospho-D-ribosyl)imidazole-4-carboxamide from 5-amino-1-(5-phospho-D-ribosyl)imidazole-4-carboxylate: step 2/2. Functionally, catalyzes two reactions in de novo purine nucleotide biosynthesis. Catalyzes the breakdown of 5-aminoimidazole- (N-succinylocarboxamide) ribotide (SAICAR or 2-[5-amino-1-(5-phospho-beta-D-ribosyl)imidazole-4-carboxamido]succinate) to 5-aminoimidazole-4-carboxamide ribotide (AICAR or 5-amino-1-(5-phospho-beta-D-ribosyl)imidazole-4-carboxamide) and fumarate, and of adenylosuccinate (ADS or N(6)-(1,2-dicarboxyethyl)-AMP) to adenosine monophosphate (AMP) and fumarate. The polypeptide is Adenylosuccinate lyase (purB) (Thermotoga maritima (strain ATCC 43589 / DSM 3109 / JCM 10099 / NBRC 100826 / MSB8)).